Here is a 469-residue protein sequence, read N- to C-terminus: tRNA-2-methylthio-N(6)-dimethylallyladenosine synthase (469 aa).

The 116-residue stretch at 27 to 142 folds into the MTTase N-terminal domain; it reads KKVYIRTFGC…LPQMLAQRAR (116 aa). 6 residues coordinate [4Fe-4S] cluster: cysteine 36, cysteine 73, cysteine 105, cysteine 179, cysteine 183, and cysteine 186. One can recognise a Radical SAM core domain in the interval 165–398; sequence KVDGAAAFVS…QATIEDNVRR (234 aa). The TRAM domain occupies 401 to 467; it reads ERRVGTVQRV…PHSLRGEPVL (67 aa).

It belongs to the methylthiotransferase family. MiaB subfamily. In terms of assembly, monomer. It depends on [4Fe-4S] cluster as a cofactor.

Its subcellular location is the cytoplasm. It carries out the reaction N(6)-dimethylallyladenosine(37) in tRNA + (sulfur carrier)-SH + AH2 + 2 S-adenosyl-L-methionine = 2-methylsulfanyl-N(6)-dimethylallyladenosine(37) in tRNA + (sulfur carrier)-H + 5'-deoxyadenosine + L-methionine + A + S-adenosyl-L-homocysteine + 2 H(+). Its function is as follows. Catalyzes the methylthiolation of N6-(dimethylallyl)adenosine (i(6)A), leading to the formation of 2-methylthio-N6-(dimethylallyl)adenosine (ms(2)i(6)A) at position 37 in tRNAs that read codons beginning with uridine. In Leptothrix cholodnii (strain ATCC 51168 / LMG 8142 / SP-6) (Leptothrix discophora (strain SP-6)), this protein is tRNA-2-methylthio-N(6)-dimethylallyladenosine synthase.